A 407-amino-acid chain; its full sequence is Argininosuccinate synthase (407 aa).

ATP contacts are provided by residues 12–20 (AYSGGLDTS) and A39. Residues Y92 and S97 each coordinate L-citrulline. Position 122 (G122) interacts with ATP. 3 residues coordinate L-aspartate: T124, N128, and D129. N128 is a binding site for L-citrulline. L-citrulline-binding residues include R132, S183, S192, E268, and Y280.

It belongs to the argininosuccinate synthase family. Type 1 subfamily. As to quaternary structure, homotetramer.

It localises to the cytoplasm. It catalyses the reaction L-citrulline + L-aspartate + ATP = 2-(N(omega)-L-arginino)succinate + AMP + diphosphate + H(+). It functions in the pathway amino-acid biosynthesis; L-arginine biosynthesis; L-arginine from L-ornithine and carbamoyl phosphate: step 2/3. The polypeptide is Argininosuccinate synthase (Caulobacter sp. (strain K31)).